Reading from the N-terminus, the 78-residue chain is UPF0291 protein SE_1024 (78 aa).

Positions 53–78 (TKVIDPEGNDVTPEKLKKIQEEKHNK) are disordered. Over residues 64-78 (TPEKLKKIQEEKHNK) the composition is skewed to basic and acidic residues.

Belongs to the UPF0291 family.

The protein localises to the cytoplasm. This is UPF0291 protein SE_1024 from Staphylococcus epidermidis (strain ATCC 12228 / FDA PCI 1200).